The sequence spans 79 residues: Mycoredoxin 1 (79 aa).

The Glutaredoxin domain occupies 1–79 (MSNVTIYATD…EVIAKIEALA (79 aa)).

Belongs to the glutaredoxin family.

The protein localises to the cytoplasm. It catalyses the reaction [mycoredoxin]-L-cysteine + arseno-mycothiol + H(+) = [mycoredoxin]-S-mycothiol-L-cysteine + arsenite. Its function is as follows. Involved in defense against toxic arsenate. Involved in the mycothiol/myoredoxin redox pathway which uses a mycothioltransferase mechanism; functions as a monothiol mixed disulfide reductase and is recycled by a second mycothiol forming mycothione which in turn is reduced in a NADPH-dependent manner. In Corynebacterium glutamicum (strain ATCC 13032 / K051), this protein is Mycoredoxin 1 (mrx1).